The chain runs to 546 residues: MKLLASTVLMGAAAASIAPQQQVLKNPFQSASKPISEAWSKSMESLNHLTDSMKDMTSEAKAVWDEVSTLFPEAMDRATFFQQPKPHTRKPDTAWDYVVKGADIQNVWVENSKGEKEREIDGKLEKYNMRAKKVDPTKLGVDKVKQYSGYLDDEENDKHLFYWFFESRNDPKNDPVVLWLNGGPGCSSLTGLFLELGPASIDKNGKLHNNPYSWNANASVIFLDQPVNVGYSYSGGSVSNTIAAGKDVYALLTLFFKQFPEYAKQDFHIAGESYAGHYIPVFTHEILSHKKRNINLKSVLIGNGLTDGLTQYEHYRPMACGEGGYPAVLDSSECKAMDNALPRCQSLIQSCYDSESVWSCVPASIYCNNAMMGPYQRTGQNVYDIRGKCEDSSNLCYSALGWISDYLNQAAVQKELGVEVSSYDSCNFDINRNFLFQGDWMQPFHRLVPDILEQIPVLIYAGDADFICNWLGNQAWTEALEWPGQKGFNAAKTKDLQLENGHKTGTFKSSGNFTFARIFGAGHMVPMDQPEASLDFLNKWLNDYTL.

The first 17 residues, 1 to 17, serve as a signal peptide directing secretion; sequence MKLLASTVLMGAAAASI. A propeptide spanning residues 18 to 132 is cleaved from the precursor; the sequence is APQQQVLKNP…KLEKYNMRAK (115 aa). Disulfide bonds link C186–C426, C320–C334, C344–C367, C351–C360, and C389–C396. A glycan (N-linked (GlcNAc...) asparagine) is linked at N217. Residue S273 is part of the active site. The active site involves D465. An N-linked (GlcNAc...) asparagine glycan is attached at N512. H523 is an active-site residue.

It belongs to the peptidase S10 family.

It is found in the vacuole. It catalyses the reaction Release of a C-terminal amino acid with broad specificity.. Functionally, vacuolar carboxypeptidase involved in degradation of small peptides. Digests preferentially peptides containing an aliphatic or hydrophobic residue in P1' position, as well as methionine, leucine or phenylalanine in P1 position of ester substrate. In Sclerotinia sclerotiorum (strain ATCC 18683 / 1980 / Ss-1) (White mold), this protein is Carboxypeptidase Y homolog A (cpyA).